The sequence spans 794 residues: Protein SPA1-RELATED 4 (794 aa).

Positions 1-268 (MKGSSESSSR…MSELLQSEFI (268 aa)) constitute a Protein kinase domain. Residues 126–165 (SCSDSGSDEDATTKSREIGSSRQEEILSERRSKQQEEVKK) are disordered. Residues 136–165 (ATTKSREIGSSRQEEILSERRSKQQEEVKK) show a composition bias toward basic and acidic residues. Residues 272 to 326 (RENLEEREAAMELRDRIEEQELLLEFLFLIQQRKQEAADKLQDTISLLSSDIDQV) are a coiled coil. Disordered stretches follow at residues 352–373 (QGAE…EESK) and 428–447 (GRSS…INDS). Residues 358 to 369 (AAEEENDDNSID) are compositionally biased toward acidic residues. 7 WD repeats span residues 482-521 (NSSN…KDGR), 531-571 (ASRS…LVTE), 574-614 (EHEK…SIGT), 616-656 (KTKA…LPLC), 660-698 (GHHK…SGIN), 707-746 (GHTN…PVLS), and 762-794 (DASQ…LEMV). A DWD box motif is present at residues 635–649 (AFGSADHKVYYYDLR).

In terms of assembly, interacts with COP1 and CO. Binds to CRY1 in response to blue light, this interaction prevents SPA1/COP1 complex formation and thus avoid COP1-dependent degradation of the transcription factor HY5 by the proteasome and promotes hypocotyl elongation.

The protein localises to the nucleus. Repressor of photomorphogenesis in the light. Probably part of the COP1/SPA E3 ubiquitin-protein ligase complex. The sequence is that of Protein SPA1-RELATED 4 (SPA4) from Arabidopsis thaliana (Mouse-ear cress).